We begin with the raw amino-acid sequence, 614 residues long: Chaperone protein DnaK (614 aa).

Residue Thr175 is modified to Phosphothreonine; by autocatalysis. Residues 577 to 614 (QAGGAEGAADPNAAAGGAQSAPHDDNVVDADFKVDEDK) are disordered. Residues 583–597 (GAADPNAAAGGAQSA) show a composition bias toward low complexity. Residues 598–614 (PHDDNVVDADFKVDEDK) are compositionally biased toward basic and acidic residues.

This sequence belongs to the heat shock protein 70 family.

Its function is as follows. Acts as a chaperone. In Clostridium beijerinckii (strain ATCC 51743 / NCIMB 8052) (Clostridium acetobutylicum), this protein is Chaperone protein DnaK.